A 343-amino-acid chain; its full sequence is Tetraacyldisaccharide 4'-kinase (343 aa).

ATP is bound at residue 55 to 62 (TVGGEGKT).

Belongs to the LpxK family.

It carries out the reaction a lipid A disaccharide + ATP = a lipid IVA + ADP + H(+). It functions in the pathway glycolipid biosynthesis; lipid IV(A) biosynthesis; lipid IV(A) from (3R)-3-hydroxytetradecanoyl-[acyl-carrier-protein] and UDP-N-acetyl-alpha-D-glucosamine: step 6/6. Its function is as follows. Transfers the gamma-phosphate of ATP to the 4'-position of a tetraacyldisaccharide 1-phosphate intermediate (termed DS-1-P) to form tetraacyldisaccharide 1,4'-bis-phosphate (lipid IVA). The sequence is that of Tetraacyldisaccharide 4'-kinase from Chelativorans sp. (strain BNC1).